Consider the following 91-residue polypeptide: Tachykinin-like peptide (91 aa).

Residues 1-19 (MKILVAFAVIMLVSAQVLA) form the signal peptide. Positions 20–51 (AEIGLNDEPEWYSDQIQEDLPVFENFLQRIAR) are excised as a propeptide. The residue at position 62 (Met62) is a Methionine amide. A disordered region spans residues 64–91 (KRNNGFGQMSRKRSAERNTIHNYERRRK). Residues 66-91 (NNGFGQMSRKRSAERNTIHNYERRRK) constitute a propeptide that is removed on maturation. Basic and acidic residues predominate over residues 76–91 (RSAERNTIHNYERRRK).

As to expression, expressed by the skin glands.

It localises to the secreted. Functionally, tachykinins are active peptides which excite neurons, evoke behavioral responses, are potent vasodilators and secretagogues, and contract (directly or indirectly) many smooth muscles. In vitro, induces contraction of guinea pig ileum smooth muscle in a dose-dependent manner. In Theloderma corticale (Kwangsi warty tree frog), this protein is Tachykinin-like peptide.